A 744-amino-acid polypeptide reads, in one-letter code: Tripartite motif-containing protein 2 (744 aa).

Phosphoserine is present on Ser-10. Residues 23–64 (CSICLERYKNPKVLPCLHTFCERCLQNYIPAHSLTLSCPVCR) form an RING-type zinc finger. The B box-type zinc finger occupies 113–154 (GKPLSCPNHDGNVMEFYCQSCETAMCRECTEGEHAEHPTVPL). 4 residues coordinate Zn(2+): Cys-118, His-121, Cys-141, and His-146. Residues 320 to 421 (TTNAVASETV…IRGSPFKLKV (102 aa)) form a Filamin repeat. A Phosphothreonine modification is found at Thr-371. Residues Ser-375, Ser-424, and Ser-428 each carry the phosphoserine modification. The segment at 432-462 (EGVKRRVKSPGSGHVKQKAVKRPASMYSTGK) is disordered. 6 NHL repeats span residues 473-516 (IFRV…FSND), 520-563 (KSRF…FSSD), 564-605 (GKFK…FQPN), 609-652 (VTRF…FNQE), 656-699 (MLKF…FDGS), and 700-743 (GSFL…YRYL).

The protein belongs to the TRIM/RBCC family. In terms of assembly, forms homooligomers. Interacts with TRIM3; this interaction reduces TRIM2 activity. Interacts with myosin V; myosin V may not be a substrate for ubiquitination. Interacts with NEFL. Interacts with phosphorylated BCL2L11. Interacts with SIRPA. RING-type zinc finger-dependent and UBE2D1-dependent autoubiquitination.

It localises to the cytoplasm. The enzyme catalyses S-ubiquitinyl-[E2 ubiquitin-conjugating enzyme]-L-cysteine + [acceptor protein]-L-lysine = [E2 ubiquitin-conjugating enzyme]-L-cysteine + N(6)-ubiquitinyl-[acceptor protein]-L-lysine.. Its pathway is protein modification; protein ubiquitination. In terms of biological role, UBE2D1-dependent E3 ubiquitin-protein ligase that mediates the ubiquitination of NEFL and of phosphorylated BCL2L11. Plays a neuroprotective function. May play a role in neuronal rapid ischemic tolerance. Plays a role in antiviral immunity and limits New World arenavirus infection independently of its ubiquitin ligase activity. The polypeptide is Tripartite motif-containing protein 2 (TRIM2) (Homo sapiens (Human)).